The primary structure comprises 297 residues: 33 kDa chaperonin (297 aa).

Cystine bridges form between cysteine 233/cysteine 235 and cysteine 267/cysteine 270.

The protein belongs to the HSP33 family. In terms of processing, under oxidizing conditions two disulfide bonds are formed involving the reactive cysteines. Under reducing conditions zinc is bound to the reactive cysteines and the protein is inactive.

It is found in the cytoplasm. In terms of biological role, redox regulated molecular chaperone. Protects both thermally unfolding and oxidatively damaged proteins from irreversible aggregation. Plays an important role in the bacterial defense system toward oxidative stress. This is 33 kDa chaperonin from Haemophilus ducreyi (strain 35000HP / ATCC 700724).